The sequence spans 248 residues: PF03932 family protein CutC (248 aa).

It belongs to the CutC family.

The protein resides in the cytoplasm. This Citrobacter koseri (strain ATCC BAA-895 / CDC 4225-83 / SGSC4696) protein is PF03932 family protein CutC.